Consider the following 305-residue polypeptide: tRNA uridine(34) hydroxylase (305 aa).

The Rhodanese domain maps to 125-219 (ADENTVVVDT…YLEEVPREQS (95 aa)). The Cysteine persulfide intermediate role is filled by C179.

This sequence belongs to the TrhO family.

The catalysed reaction is uridine(34) in tRNA + AH2 + O2 = 5-hydroxyuridine(34) in tRNA + A + H2O. Functionally, catalyzes oxygen-dependent 5-hydroxyuridine (ho5U) modification at position 34 in tRNAs. This is tRNA uridine(34) hydroxylase from Brucella suis (strain ATCC 23445 / NCTC 10510).